Consider the following 227-residue polypeptide: Mitochondrial inner membrane protease ATP23 (227 aa).

H124 provides a ligand contact to a divalent metal cation. Residue E125 is part of the active site. H128 lines the a divalent metal cation pocket.

This sequence belongs to the peptidase M76 family. Interacts with ATP6.

The protein localises to the mitochondrion inner membrane. In terms of biological role, has a dual role in the assembly of mitochondrial ATPase. Acts as a protease that removes the N-terminal 10 residues of mitochondrial ATPase CF(0) subunit 6 (ATP6) at the intermembrane space side. Also involved in the correct assembly of the membrane-embedded ATPase CF(0) particle, probably mediating association of ATP6 with the subunit 9 ring. The protein is Mitochondrial inner membrane protease ATP23 (ATP23) of Saccharomyces cerevisiae (strain YJM789) (Baker's yeast).